The chain runs to 211 residues: Ras-related protein Rab-38 (211 aa).

Residues G19, V20, G21, K22, T23, S24, S35, S36, Y38, and T41 each contribute to the GTP site. Residue T23 coordinates Mg(2+). The Switch 1 signature appears at 32 to 46; sequence QNFSSHYRATIGVDF. T41 and D65 together coordinate Mg(2+). GTP is bound by residues G68, K128, D130, A160, and K161. Residues 68 to 81 carry the Switch 2 motif; that stretch reads GQERFGNMTRVYYR. Residue C205 is the site of S-palmitoyl cysteine attachment. C208 is lipidated: S-geranylgeranyl cysteine.

Belongs to the small GTPase superfamily. Rab family. As to quaternary structure, interacts with ANKRD27. The cofactor is Mg(2+).

The protein localises to the cell membrane. It is found in the cytoplasmic vesicle. It localises to the phagosome. The protein resides in the phagosome membrane. Its subcellular location is the melanosome. The protein localises to the melanosome membrane. The catalysed reaction is GTP + H2O = GDP + phosphate + H(+). Its activity is regulated as follows. Regulated by guanine nucleotide exchange factors (GEFs) including the BLOC-3 complex composed of HPS1 and HPS4 which promote the exchange of bound GDP for free GTP. Regulated by GTPase activating proteins (GAPs) including SGSM2 which increase the GTP hydrolysis activity. Inhibited by GDP dissociation inhibitors (GDIs). In terms of biological role, the small GTPases Rab are key regulators of intracellular membrane trafficking, from the formation of transport vesicles to their fusion with membranes. Rabs cycle between an inactive GDP-bound form and an active GTP-bound form that is able to recruit to membranes different sets of downstream effectors directly responsible for vesicle formation, movement, tethering and fusion. RAB38 plays a role in the maturation of phagosomes that engulf pathogens, such as S.aureus and Mycobacterium. May be involved in melanosomal transport and docking. Involved in the proper sorting of TYRP1. Involved in peripheral melanosomal distribution of TYRP1 in melanocytes; the function, which probably is implicating vesicle-trafficking, includes cooperation with ANKRD27 and VAMP7. Plays an important role in the control of melanin production and melanosome biogenesis. In concert with RAB32, regulates the proper trafficking of melanogenic enzymes TYR, TYRP1 and DCT/TYRP2 to melanosomes in melanocytes. This Mus musculus (Mouse) protein is Ras-related protein Rab-38.